The following is a 1024-amino-acid chain: Error-prone DNA polymerase (1024 aa).

Belongs to the DNA polymerase type-C family. DnaE2 subfamily.

It localises to the cytoplasm. The enzyme catalyses DNA(n) + a 2'-deoxyribonucleoside 5'-triphosphate = DNA(n+1) + diphosphate. Functionally, DNA polymerase involved in damage-induced mutagenesis and translesion synthesis (TLS). It is not the major replicative DNA polymerase. The sequence is that of Error-prone DNA polymerase from Vibrio campbellii (strain ATCC BAA-1116).